The chain runs to 61 residues: Large ribosomal subunit protein uL30 (61 aa).

This sequence belongs to the universal ribosomal protein uL30 family. Part of the 50S ribosomal subunit.

The polypeptide is Large ribosomal subunit protein uL30 (Chlorobaculum parvum (strain DSM 263 / NCIMB 8327) (Chlorobium vibrioforme subsp. thiosulfatophilum)).